The following is a 192-amino-acid chain: Holliday junction branch migration complex subunit RuvA (192 aa).

The interval 1–64 is domain I; the sequence is MLGRLTGLLA…EDAQVLFGFL (64 aa). Residues 65–139 form a domain II region; it reads TAPERETFRM…GKLGADLGPA (75 aa). The flexible linker stretch occupies residues 139-143; sequence AIGGK. Positions 144–192 are domain III; that stretch reads PASDAQADILQALIALGYSEREAQAAVKALPAEVGVSDGIKLALKALAR.

Belongs to the RuvA family. Homotetramer. Forms an RuvA(8)-RuvB(12)-Holliday junction (HJ) complex. HJ DNA is sandwiched between 2 RuvA tetramers; dsDNA enters through RuvA and exits via RuvB. An RuvB hexamer assembles on each DNA strand where it exits the tetramer. Each RuvB hexamer is contacted by two RuvA subunits (via domain III) on 2 adjacent RuvB subunits; this complex drives branch migration. In the full resolvosome a probable DNA-RuvA(4)-RuvB(12)-RuvC(2) complex forms which resolves the HJ.

Its subcellular location is the cytoplasm. Functionally, the RuvA-RuvB-RuvC complex processes Holliday junction (HJ) DNA during genetic recombination and DNA repair, while the RuvA-RuvB complex plays an important role in the rescue of blocked DNA replication forks via replication fork reversal (RFR). RuvA specifically binds to HJ cruciform DNA, conferring on it an open structure. The RuvB hexamer acts as an ATP-dependent pump, pulling dsDNA into and through the RuvAB complex. HJ branch migration allows RuvC to scan DNA until it finds its consensus sequence, where it cleaves and resolves the cruciform DNA. In Methylibium petroleiphilum (strain ATCC BAA-1232 / LMG 22953 / PM1), this protein is Holliday junction branch migration complex subunit RuvA.